Reading from the N-terminus, the 159-residue chain is Phosphopantetheine adenylyltransferase (159 aa).

Serine 9 contributes to the substrate binding site. ATP contacts are provided by residues 9–10 (SF) and histidine 17. The substrate site is built by lysine 41, leucine 73, and lysine 87. ATP is bound by residues 88–90 (GLR), glutamate 98, and 123–129 (YSYLSSS).

This sequence belongs to the bacterial CoaD family. In terms of assembly, homohexamer. The cofactor is Mg(2+).

The protein resides in the cytoplasm. It carries out the reaction (R)-4'-phosphopantetheine + ATP + H(+) = 3'-dephospho-CoA + diphosphate. Its pathway is cofactor biosynthesis; coenzyme A biosynthesis; CoA from (R)-pantothenate: step 4/5. Reversibly transfers an adenylyl group from ATP to 4'-phosphopantetheine, yielding dephospho-CoA (dPCoA) and pyrophosphate. This is Phosphopantetheine adenylyltransferase from Clostridium botulinum (strain Alaska E43 / Type E3).